Here is a 302-residue protein sequence, read N- to C-terminus: Quinolinate synthase (302 aa).

Positions 24 and 41 each coordinate iminosuccinate. [4Fe-4S] cluster is bound at residue Cys-86. Iminosuccinate-binding positions include 112 to 114 (YVN) and Ser-129. Residue Cys-173 coordinates [4Fe-4S] cluster. Iminosuccinate-binding positions include 199-201 (HPE) and Thr-216. Residue Cys-259 participates in [4Fe-4S] cluster binding.

Belongs to the quinolinate synthase family. Type 2 subfamily. The cofactor is [4Fe-4S] cluster.

It localises to the cytoplasm. It carries out the reaction iminosuccinate + dihydroxyacetone phosphate = quinolinate + phosphate + 2 H2O + H(+). It participates in cofactor biosynthesis; NAD(+) biosynthesis; quinolinate from iminoaspartate: step 1/1. Functionally, catalyzes the condensation of iminoaspartate with dihydroxyacetone phosphate to form quinolinate. The polypeptide is Quinolinate synthase (Thermococcus onnurineus (strain NA1)).